Here is a 362-residue protein sequence, read N- to C-terminus: tRNA N6-adenosine threonylcarbamoyltransferase (362 aa).

Residues histidine 120 and histidine 124 each coordinate Fe cation. Residues 142 to 146 (LASGG), aspartate 175, glycine 188, and asparagine 288 contribute to the substrate site. Aspartate 316 is a Fe cation binding site. Residues 342 to 351 (RPRWPLDPDA) are compositionally biased toward basic and acidic residues. The interval 342–362 (RPRWPLDPDAPKAAGAGGVKA) is disordered.

The protein belongs to the KAE1 / TsaD family. Fe(2+) serves as cofactor.

The protein resides in the cytoplasm. The catalysed reaction is L-threonylcarbamoyladenylate + adenosine(37) in tRNA = N(6)-L-threonylcarbamoyladenosine(37) in tRNA + AMP + H(+). In terms of biological role, required for the formation of a threonylcarbamoyl group on adenosine at position 37 (t(6)A37) in tRNAs that read codons beginning with adenine. Is involved in the transfer of the threonylcarbamoyl moiety of threonylcarbamoyl-AMP (TC-AMP) to the N6 group of A37, together with TsaE and TsaB. TsaD likely plays a direct catalytic role in this reaction. The polypeptide is tRNA N6-adenosine threonylcarbamoyltransferase (Rhodospirillum rubrum (strain ATCC 11170 / ATH 1.1.1 / DSM 467 / LMG 4362 / NCIMB 8255 / S1)).